A 1044-amino-acid polypeptide reads, in one-letter code: Pre-mRNA-splicing factor ATP-dependent RNA helicase DEAH1 (1044 aa).

Residues 106-206 are disordered; that stretch reads EVVVEKKSSV…TLSKKEKEEA (101 aa). The segment covering 108–121 has biased composition (basic and acidic residues); it reads VVEKKSSVSESRKS. Residues 122–132 show a composition bias toward basic residues; sequence DKGKKRFRKKS. A phosphoserine mark is found at Ser135 and Ser138. The span at 157 to 166 shows a compositional bias: acidic residues; sequence EEDDGSESEE. Positions 167–206 are enriched in basic and acidic residues; that stretch reads ERVRDQKEREELEQHLKDRDTARTRKLTEQTLSKKEKEEA. Residues 414-577 form the Helicase ATP-binding domain; sequence LKAVEEHQVL…FDTAPIFSFP (164 aa). 427 to 434 provides a ligand contact to ATP; the sequence is GDTGSGKT. The DEAH box signature appears at 524–527; the sequence is DEAH. In terms of domain architecture, Helicase C-terminal spans 600-775; that stretch reads IVTILTIHVR…SVVLALKSLG (176 aa).

This sequence belongs to the DEAD box helicase family. DEAH subfamily. PRP2 sub-subfamily. In terms of tissue distribution, widely expressed.

It catalyses the reaction ATP + H2O = ADP + phosphate + H(+). In terms of biological role, involved in pre-mRNA splicing. This chain is Pre-mRNA-splicing factor ATP-dependent RNA helicase DEAH1, found in Arabidopsis thaliana (Mouse-ear cress).